Reading from the N-terminus, the 479-residue chain is Carbohydrate sulfotransferase 3 (479 aa).

Residues 1 to 20 lie on the Cytoplasmic side of the membrane; that stretch reads MEKGLTLPQDCRDFVHSLKM. A helical; Signal-anchor for type II membrane protein membrane pass occupies residues 21–38; it reads RSKYALFLVFVVIVFVFI. Residues 39 to 479 are Lumenal-facing; it reads EKENKIISRV…LEERGTFWVT (441 aa). N-linked (GlcNAc...) asparagine glycans are attached at residues asparagine 63, asparagine 74, and asparagine 96. A disordered region spans residues 108 to 128; that stretch reads EAAGEEEEEQRKEEEPPRPAV. Residue 141 to 147 coordinates 3'-phosphoadenylyl sulfate; sequence TRTGSSF. N-linked (GlcNAc...) asparagine glycosylation occurs at asparagine 256. 301–309 is a binding site for 3'-phosphoadenylyl sulfate; it reads RDPRAVLAS. Asparagine 420 and asparagine 464 each carry an N-linked (GlcNAc...) asparagine glycan.

The protein belongs to the sulfotransferase 1 family. Gal/GlcNAc/GalNAc subfamily. In terms of processing, N-glycosylated. As to expression, widely expressed in adult tissues. Expressed in heart, placenta, skeletal muscle and pancreas. Also expressed in various immune tissues such as spleen, lymph node, thymus and appendix.

It localises to the golgi apparatus membrane. It catalyses the reaction chondroitin beta-D-glucuronate + n 3'-phosphoadenylyl sulfate = chondroitin 6'-sulfate + n adenosine 3',5'-bisphosphate + n H(+). The enzyme catalyses 3'-phosphoadenylyl sulfate + keratan = adenosine 3',5'-bisphosphate + keratan 6'-sulfate.. In terms of biological role, sulfotransferase that utilizes 3'-phospho-5'-adenylyl sulfate (PAPS) as sulfonate donor to catalyze the transfer of sulfate to position 6 of the N-acetylgalactosamine (GalNAc) residue of chondroitin. Chondroitin sulfate constitutes the predominant proteoglycan present in cartilage and is distributed on the surfaces of many cells and extracellular matrices. Catalyzes with a lower efficiency the sulfation of Gal residues of keratan sulfate, another glycosaminoglycan. Can also catalyze the sulfation of the Gal residues in sialyl N-acetyllactosamine (sialyl LacNAc) oligosaccharides. May play a role in the maintenance of naive T-lymphocytes in the spleen. The protein is Carbohydrate sulfotransferase 3 (CHST3) of Homo sapiens (Human).